A 362-amino-acid polypeptide reads, in one-letter code: MRKQWLGICIAAGMLAACTSDDGQQQTVSVPQPAVCNGPIVEISGADPRFEPLNATANQDYQRDGKSYKIVQDPSRFSQAGLAAIYDAEPGSNLTASGEAFDPTQLTAAHPTLPIPSYARITNLANGRMIVVRINDRGPYGNDRVISLSRAAADRLNTSNNTKVRIDPIIVAQDGSLSGPGMACTTVAKQTYALPAPPDLSGGAGTSSVSGPQGDILPVSNSTLKSEDPTGAPVTSSGFLGAPTTLAPGVLEGSEPTPAPQPVVTAPSTTPATSPAMVTPQAVSQSASGNFMVQVGAVSDQARAQQYQQQLGQKFGVPGRVTQNGAVWRIQLGPFASKAEASTLQQRLQTEAQLQSFITTAQ.

Residues 1 to 17 form the signal peptide; it reads MRKQWLGICIAAGMLAA. C18 carries the N-palmitoyl cysteine lipid modification. The S-diacylglycerol cysteine moiety is linked to residue C18. Positions 198 to 276 are disordered; it reads PDLSGGAGTS…PSTTPATSPA (79 aa). Over residues 262–276 the composition is skewed to low complexity; sequence PVVTAPSTTPATSPA. Residues 285–361 form the SPOR domain; that stretch reads QSASGNFMVQ…AQLQSFITTA (77 aa).

The protein belongs to the RlpA family.

Its subcellular location is the cell membrane. Lytic transglycosylase with a strong preference for naked glycan strands that lack stem peptides. The protein is Endolytic peptidoglycan transglycosylase RlpA of Escherichia coli (strain K12).